We begin with the raw amino-acid sequence, 386 residues long: 2-deoxy-scyllo-inosose synthase (386 aa).

NAD(+) is bound by residues Asp-42, Glu-73–Lys-76, Gly-105–Asn-109, Thr-129–Thr-130, Ser-140–Lys-142, and Lys-151–Asn-152. Lys-142 is a catalytic residue. Residue Glu-184 coordinates Co(2+). Residue Glu-244 is part of the active site. The Co(2+) site is built by His-247 and His-263.

Belongs to the sugar phosphate cyclases superfamily. DOI synthase family. It depends on NAD(+) as a cofactor. Co(2+) is required as a cofactor.

The catalysed reaction is D-glucose 6-phosphate = 2-deoxy-L-scyllo-inosose + phosphate. It functions in the pathway metabolic intermediate biosynthesis; 2-deoxystreptamine biosynthesis; 2-deoxystreptamine from D-glucose 6-phosphate: step 1/4. The protein operates within antibiotic biosynthesis; paromomycin biosynthesis. Functionally, catalyzes the intramolecular carbocycle formation from D-glucose-6-phosphate to 2-deoxy-scyllo-inosose (DOI). This chain is 2-deoxy-scyllo-inosose synthase (parC), found in Streptomyces paromomycinus (Streptomyces rimosus subsp. paromomycinus).